Reading from the N-terminus, the 838-residue chain is pre-rRNA 2'-O-ribose RNA methyltransferase FTSJ3 (838 aa).

5 residues coordinate S-adenosyl-L-methionine: Gly56, Trp58, Asp76, Asp92, and Asp117. Lys157 acts as the Proton acceptor in catalysis. The tract at residues 332–367 is disordered; sequence ISLSSEEEEEGDEEEAVAETKQAPEEEEEREEEQLN. Phosphoserine occurs at positions 333, 335, and 336. Positions 336–348 are enriched in acidic residues; the sequence is SEEEEEGDEEEAV. Arg390 carries the citrulline modification. The segment at 453-482 is disordered; sequence IYVSDAEDDDDTSLESDLDPEELAGVRTHS. Positions 457-474 are enriched in acidic residues; sequence DAEDDDDTSLESDLDPEE. Phosphoserine occurs at positions 532 and 545. Residues 537-639 are disordered; sequence DADEALEISQ…GRGSKADEDG (103 aa). A Glycyl lysine isopeptide (Lys-Gly) (interchain with G-Cter in SUMO2) cross-link involves residue Lys571. Position 576 is a phosphoserine (Ser576). Residues Lys634 and Lys650 each participate in a glycyl lysine isopeptide (Lys-Gly) (interchain with G-Cter in SUMO2) cross-link. Residue Ser667 is modified to Phosphoserine. Lys669 participates in a covalent cross-link: Glycyl lysine isopeptide (Lys-Gly) (interchain with G-Cter in SUMO2). Ser679 carries the phosphoserine modification. A Glycyl lysine isopeptide (Lys-Gly) (interchain with G-Cter in SUMO2) cross-link involves residue Lys701. Positions 730-768 form a coiled coil; the sequence is IKKVAEAKARKKRRVLKKLEQTKKKAEAVVNTVDISERE. At Arg774 the chain carries Citrulline. Positions 802-812 are enriched in basic residues; it reads VRRPAGVKGHF. The tract at residues 802 to 838 is disordered; the sequence is VRRPAGVKGHFKVVDSRMKKDQRAQQRKEQKKKHKRK. Residues 813 to 829 are compositionally biased toward basic and acidic residues; sequence KVVDSRMKKDQRAQQRK.

The protein belongs to the class I-like SAM-binding methyltransferase superfamily. RNA methyltransferase RlmE family. SPB1 subfamily. In terms of assembly, interacts with NIP7. In terms of processing, citrullinated by PADI4.

It localises to the nucleus. The protein localises to the nucleolus. It carries out the reaction a ribonucleotide in rRNA + S-adenosyl-L-methionine = a 2'-O-methylribonucleotide in rRNA + S-adenosyl-L-homocysteine + H(+). Functionally, RNA 2'-O-methyltransferase involved in the processing of the 34S pre-rRNA to 18S rRNA and in 40S ribosomal subunit formation. In Mus musculus (Mouse), this protein is pre-rRNA 2'-O-ribose RNA methyltransferase FTSJ3 (Ftsj3).